Consider the following 228-residue polypeptide: Small ribosomal subunit protein uS3 (228 aa).

Residues 39–107 (TREYLQDKLK…PVHINIEEIR (69 aa)) enclose the KH type-2 domain.

This sequence belongs to the universal ribosomal protein uS3 family. Part of the 30S ribosomal subunit. Forms a tight complex with proteins S10 and S14.

In terms of biological role, binds the lower part of the 30S subunit head. Binds mRNA in the 70S ribosome, positioning it for translation. The sequence is that of Small ribosomal subunit protein uS3 from Pseudomonas entomophila (strain L48).